Here is a 368-residue protein sequence, read N- to C-terminus: Ribosomal RNA large subunit methyltransferase M (368 aa).

Residues Ser-189, 222-225 (CPGG), Asp-241, Asp-261, and Asp-278 each bind S-adenosyl-L-methionine. Lys-307 (proton acceptor) is an active-site residue.

Belongs to the class I-like SAM-binding methyltransferase superfamily. RNA methyltransferase RlmE family. RlmM subfamily. As to quaternary structure, monomer.

The protein localises to the cytoplasm. It carries out the reaction cytidine(2498) in 23S rRNA + S-adenosyl-L-methionine = 2'-O-methylcytidine(2498) in 23S rRNA + S-adenosyl-L-homocysteine + H(+). In terms of biological role, catalyzes the 2'-O-methylation at nucleotide C2498 in 23S rRNA. In Yersinia pseudotuberculosis serotype O:1b (strain IP 31758), this protein is Ribosomal RNA large subunit methyltransferase M.